The chain runs to 188 residues: Elongation factor P (188 aa).

This sequence belongs to the elongation factor P family.

It localises to the cytoplasm. The protein operates within protein biosynthesis; polypeptide chain elongation. Its function is as follows. Involved in peptide bond synthesis. Stimulates efficient translation and peptide-bond synthesis on native or reconstituted 70S ribosomes in vitro. Probably functions indirectly by altering the affinity of the ribosome for aminoacyl-tRNA, thus increasing their reactivity as acceptors for peptidyl transferase. This chain is Elongation factor P, found in Bacteroides thetaiotaomicron (strain ATCC 29148 / DSM 2079 / JCM 5827 / CCUG 10774 / NCTC 10582 / VPI-5482 / E50).